Consider the following 7481-residue polypeptide: Polyketide synthase GfsA (7481 aa).

The tract at residues 24–1020 (ASDEPIAVIG…ETAEFVRARL (997 aa)) is loading module (LM). Residues 26–451 (DEPIAVIGLS…GTNCHVVVSA (426 aa)) enclose the Ketosynthase family 3 (KS3) 1 domain. A disordered region spans residues 60 to 80 (RVPADRETPPSTEEESADGEA). Gln197 serves as the catalytic For decarboxylation activity of LM. The active-site For acyltransferase activity of LM is the Ser662. Positions 945–1020 (PDPVETVRQL…ETAEFVRARL (76 aa)) constitute a Carrier 1 domain. Ser980 is subject to O-(pantetheine 4'-phosphoryl)serine. One can recognise a Ketosynthase family 3 (KS3) 2 domain in the interval 1038 to 1454 (DEPIAVVAMS…GTNAHVILEQ (417 aa)). 4 module regions span residues 1038-2517 (DEPI…AGEL), 2538-4063 (EDPI…LQRI), 4084-5636 (DDPI…GSEV), and 5655-7400 (DEPV…GEQL). Residues Cys1201, His1336, and His1376 each act as for beta-ketoacyl synthase 1 activity in the active site. Residues 2442-2517 (RVLLDLVRGR…ALAEHLAGEL (76 aa)) form the Carrier 2 domain. O-(pantetheine 4'-phosphoryl)serine is present on Ser2477. The region spanning 2538 to 2964 (EDPIAIVAMS…GTNAHVIIEE (427 aa)) is the Ketosynthase family 3 (KS3) 3 domain. Residues Cys2711, His2846, and His2886 each act as for beta-ketoacyl synthase 2 activity in the active site. The 76-residue stretch at 3988–4063 (QALQDLVLTE…ATTEYLLQRI (76 aa)) folds into the Carrier 3 domain. An O-(pantetheine 4'-phosphoryl)serine modification is found at Ser4023. Residues 4084–4514 (DDPIAIVAMG…GTNAHVILEQ (431 aa)) enclose the Ketosynthase family 3 (KS3) 4 domain. Catalysis depends on for beta-ketoacyl synthase 3 activity residues Cys4261, His4396, and His4436. Residues 5561-5636 (TALLDLIRGQ…ALAEYVGSEV (76 aa)) enclose the Carrier 4 domain. Residue Ser5596 is modified to O-(pantetheine 4'-phosphoryl)serine. Positions 5655–6081 (DEPVAIIGMS…GTNAHVILEQ (427 aa)) constitute a Ketosynthase family 3 (KS3) 5 domain. Catalysis depends on for beta-ketoacyl synthase 4 activity residues Cys5828, His5963, and His6003. Residues 6561 to 6685 (HPLLGAAVAL…GVLASGAATV (125 aa)) are N-terminal hotdog fold. The 281-residue stretch at 6561–6841 (HPLLGAAVAL…LRPVSADTIA (281 aa)) folds into the PKS/mFAS DH domain. The Proton acceptor; for dehydratase activity role is filled by His6593. A C-terminal hotdog fold region spans residues 6700–6841 (ATAVDIDGLY…LRPVSADTIA (142 aa)). Asp6761 serves as the catalytic Proton donor; for dehydratase activity. The 76-residue stretch at 7325 to 7400 (QELLDFVCEH…LLAGHIGEQL (76 aa)) folds into the Carrier 5 domain. Ser7360 bears the O-(pantetheine 4'-phosphoryl)serine mark.

Homodimer. The loading module (LM, residues 13-926) dimerizes. LM cross-links to its cognate acyl-carrier domain in a manner that seems physiological; mutation of residues in the 2 domains alters reactions efficiency in a manner predicted by the cross-linked crystal. It depends on pantetheine 4'-phosphate as a cofactor.

It participates in antibiotic biosynthesis. In terms of biological role, first protein in the synthesis of the 16-membered macrolide antibiotics FD-891 and FD-892. Composed of 5 modules; the first is a loading module (LM) that synthesizes a starter unit used by the first elongation module for polyketide chain elongation. The starter unit is extended by multiple rounds of addition of malonyl-CoA or methylmalonyl-CoA, and other modifications to help generate the final products. The loading module (residues 1-927, LM with an inactive acyltransferase domain) preferentially decarboxylates malonyl-GfsA acyl carrier protein of the LM (ACP-LM) over methylmalonyl-GfsA ACP-LM and has no activity on malonyl-CoA or methymalonyl-CoA. LM decarboxylates malonyl-ACP-LM better than the malonyl-ACP-1 module of GfsA (i.e. the next module in the same protein) and has no activity on other malonyl-ACP modules. This is Polyketide synthase GfsA from Streptomyces halstedii.